The chain runs to 194 residues: Mersacidin decarboxylase (194 aa).

His-75 is a catalytic residue.

It belongs to the HFCD (homooligomeric flavin containing Cys decarboxylase) superfamily. As to quaternary structure, homododecamer. FAD serves as cofactor.

It participates in antibiotic biosynthesis; mersacidin biosynthesis. Its function is as follows. Catalyzes the oxidative decarboxylation of the C-terminal cysteine residue of mersacidin to an aminoenethiol residue. The protein is Mersacidin decarboxylase (mrsD) of Bacillus sp. (strain HIL-Y85/54728).